Reading from the N-terminus, the 96-residue chain is Large ribosomal subunit protein eL43 (96 aa).

The Zn(2+) site is built by cysteine 41, cysteine 44, cysteine 59, and cysteine 62. The C4-type zinc finger occupies 41-62; that stretch reads CPVCAFPKLKRAGTSIWVCEKC.

The protein belongs to the eukaryotic ribosomal protein eL43 family. Putative zinc-binding subfamily. Part of the 50S ribosomal subunit. Zn(2+) serves as cofactor.

Binds to the 23S rRNA. This Methanococcus maripaludis (strain DSM 14266 / JCM 13030 / NBRC 101832 / S2 / LL) protein is Large ribosomal subunit protein eL43.